The sequence spans 89 residues: Small ribosomal subunit protein uS19 (89 aa).

Belongs to the universal ribosomal protein uS19 family.

Protein S19 forms a complex with S13 that binds strongly to the 16S ribosomal RNA. The sequence is that of Small ribosomal subunit protein uS19 from Bacteroides thetaiotaomicron (strain ATCC 29148 / DSM 2079 / JCM 5827 / CCUG 10774 / NCTC 10582 / VPI-5482 / E50).